Reading from the N-terminus, the 423-residue chain is Serine--tRNA ligase (423 aa).

230-232 lines the L-serine pocket; that stretch reads TAE. 261–263 serves as a coordination point for ATP; the sequence is RQE. Glu-284 contacts L-serine. Residue 348–351 coordinates ATP; the sequence is EISS. Position 384 (Ser-384) interacts with L-serine.

The protein belongs to the class-II aminoacyl-tRNA synthetase family. Type-1 seryl-tRNA synthetase subfamily. Homodimer. The tRNA molecule binds across the dimer.

Its subcellular location is the cytoplasm. It catalyses the reaction tRNA(Ser) + L-serine + ATP = L-seryl-tRNA(Ser) + AMP + diphosphate + H(+). It carries out the reaction tRNA(Sec) + L-serine + ATP = L-seryl-tRNA(Sec) + AMP + diphosphate + H(+). It participates in aminoacyl-tRNA biosynthesis; selenocysteinyl-tRNA(Sec) biosynthesis; L-seryl-tRNA(Sec) from L-serine and tRNA(Sec): step 1/1. Catalyzes the attachment of serine to tRNA(Ser). Is also able to aminoacylate tRNA(Sec) with serine, to form the misacylated tRNA L-seryl-tRNA(Sec), which will be further converted into selenocysteinyl-tRNA(Sec). The sequence is that of Serine--tRNA ligase from Thermoanaerobacter pseudethanolicus (strain ATCC 33223 / 39E) (Clostridium thermohydrosulfuricum).